Consider the following 287-residue polypeptide: MGIRSFRPYTPGTRTRVVSDFSEVTRRKPERSLVVAKHRRKGRNNRGVITCRHRGGGHKRLYRIVDFRRDKHGVVARVAAIQYDPHRNARLALLYYTDGEKRYILHPAGVQVGQEVVAGPEAPIEVGNALPLSAIPLGSAVHNVELYAGRGGQMVRTAGASAQVMAKEGDYVALKLPSTEVRLVRRECYATLGEVGNSEVRNTSLGKAGRKRWLGRRPEVRGSVMNPCDHPHGGGEGRAPIGRSGPVTPWGKPALGLKTRKRNKPSNKFVLRKRRKTSKRSRGGRDS.

The disordered stretch occupies residues 221–287; sequence RGSVMNPCDH…SKRSRGGRDS (67 aa). The span at 258–287 shows a compositional bias: basic residues; sequence KTRKRNKPSNKFVLRKRRKTSKRSRGGRDS.

The protein belongs to the universal ribosomal protein uL2 family. As to quaternary structure, part of the 50S ribosomal subunit. Forms a bridge to the 30S subunit in the 70S ribosome.

One of the primary rRNA binding proteins. Required for association of the 30S and 50S subunits to form the 70S ribosome, for tRNA binding and peptide bond formation. It has been suggested to have peptidyltransferase activity; this is somewhat controversial. Makes several contacts with the 16S rRNA in the 70S ribosome. This is Large ribosomal subunit protein uL2 from Synechococcus sp. (strain RCC307).